We begin with the raw amino-acid sequence, 434 residues long: 3-phosphoshikimate 1-carboxyvinyltransferase (434 aa).

Lys-22, Ser-23, and Arg-27 together coordinate 3-phosphoshikimate. Position 22 (Lys-22) interacts with phosphoenolpyruvate. Positions 93 and 121 each coordinate phosphoenolpyruvate. Residues Ser-168, Ser-169, Gln-170, Ser-199, Asp-320, and Lys-347 each coordinate 3-phosphoshikimate. Gln-170 contacts phosphoenolpyruvate. Asp-320 acts as the Proton acceptor in catalysis. The phosphoenolpyruvate site is built by Arg-351, Arg-394, and Lys-419.

It belongs to the EPSP synthase family. Monomer.

It is found in the cytoplasm. It carries out the reaction 3-phosphoshikimate + phosphoenolpyruvate = 5-O-(1-carboxyvinyl)-3-phosphoshikimate + phosphate. It functions in the pathway metabolic intermediate biosynthesis; chorismate biosynthesis; chorismate from D-erythrose 4-phosphate and phosphoenolpyruvate: step 6/7. Functionally, catalyzes the transfer of the enolpyruvyl moiety of phosphoenolpyruvate (PEP) to the 5-hydroxyl of shikimate-3-phosphate (S3P) to produce enolpyruvyl shikimate-3-phosphate and inorganic phosphate. The polypeptide is 3-phosphoshikimate 1-carboxyvinyltransferase (Burkholderia orbicola (strain MC0-3)).